Consider the following 181-residue polypeptide: ATP-dependent protease subunit HslV (181 aa).

T9 is a catalytic residue. 3 residues coordinate Na(+): A166, C169, and T172.

The protein belongs to the peptidase T1B family. HslV subfamily. In terms of assembly, a double ring-shaped homohexamer of HslV is capped on each side by a ring-shaped HslU homohexamer. The assembly of the HslU/HslV complex is dependent on binding of ATP.

It is found in the cytoplasm. The enzyme catalyses ATP-dependent cleavage of peptide bonds with broad specificity.. With respect to regulation, allosterically activated by HslU binding. In terms of biological role, protease subunit of a proteasome-like degradation complex believed to be a general protein degrading machinery. The protein is ATP-dependent protease subunit HslV of Staphylococcus aureus (strain bovine RF122 / ET3-1).